The following is a 488-amino-acid chain: Glutamyl-tRNA(Gln) amidotransferase subunit A (488 aa).

Residues K78 and S153 each act as charge relay system in the active site. S177 acts as the Acyl-ester intermediate in catalysis.

Belongs to the amidase family. GatA subfamily. Heterotrimer of A, B and C subunits.

The enzyme catalyses L-glutamyl-tRNA(Gln) + L-glutamine + ATP + H2O = L-glutaminyl-tRNA(Gln) + L-glutamate + ADP + phosphate + H(+). Allows the formation of correctly charged Gln-tRNA(Gln) through the transamidation of misacylated Glu-tRNA(Gln) in organisms which lack glutaminyl-tRNA synthetase. The reaction takes place in the presence of glutamine and ATP through an activated gamma-phospho-Glu-tRNA(Gln). The protein is Glutamyl-tRNA(Gln) amidotransferase subunit A of Thermoanaerobacter pseudethanolicus (strain ATCC 33223 / 39E) (Clostridium thermohydrosulfuricum).